We begin with the raw amino-acid sequence, 175 residues long: Inorganic pyrophosphatase (175 aa).

Positions 30, 44, and 56 each coordinate substrate. Residues Asp66, Asp71, and Asp103 each coordinate Mg(2+). Tyr142 contacts substrate.

This sequence belongs to the PPase family. In terms of assembly, homohexamer. Mg(2+) is required as a cofactor.

The protein localises to the cytoplasm. It carries out the reaction diphosphate + H2O = 2 phosphate + H(+). Its function is as follows. Catalyzes the hydrolysis of inorganic pyrophosphate (PPi) forming two phosphate ions. The protein is Inorganic pyrophosphatase of Yersinia pestis.